The chain runs to 127 residues: Large ribosomal subunit protein bL12c (127 aa).

The segment at 104-127 (GVAKDAAEEAKKQIEDAGGKASLK) is disordered. The span at 105-121 (VAKDAAEEAKKQIEDAG) shows a compositional bias: basic and acidic residues.

Belongs to the bacterial ribosomal protein bL12 family. In terms of assembly, homodimer. Part of the ribosomal stalk of the 50S ribosomal subunit. Forms a multimeric L10(L12)X complex, where L10 forms an elongated spine to which 2 to 4 L12 dimers bind in a sequential fashion. Binds GTP-bound translation factors.

The protein resides in the plastid. It localises to the chloroplast. In terms of biological role, forms part of the ribosomal stalk which helps the ribosome interact with GTP-bound translation factors. Is thus essential for accurate translation. In Trieres chinensis (Marine centric diatom), this protein is Large ribosomal subunit protein bL12c.